Here is a 226-residue protein sequence, read N- to C-terminus: Urease accessory protein UreF (226 aa).

The protein belongs to the UreF family. As to quaternary structure, ureD, UreF and UreG form a complex that acts as a GTP-hydrolysis-dependent molecular chaperone, activating the urease apoprotein by helping to assemble the nickel containing metallocenter of UreC. The UreE protein probably delivers the nickel.

It localises to the cytoplasm. In terms of biological role, required for maturation of urease via the functional incorporation of the urease nickel metallocenter. The protein is Urease accessory protein UreF of Burkholderia ambifaria (strain MC40-6).